A 401-amino-acid polypeptide reads, in one-letter code: Imidazolonepropionase (401 aa).

Residues His-66 and His-68 each coordinate Fe(3+). Positions 66 and 68 each coordinate Zn(2+). The 4-imidazolone-5-propanoate site is built by Arg-75, Tyr-138, and His-171. N-formimidoyl-L-glutamate is bound at residue Tyr-138. His-236 provides a ligand contact to Fe(3+). His-236 is a binding site for Zn(2+). Gln-239 contacts 4-imidazolone-5-propanoate. Asp-311 is a binding site for Fe(3+). Asp-311 contributes to the Zn(2+) binding site. Asn-313 and Gly-315 together coordinate N-formimidoyl-L-glutamate. Residue Thr-316 participates in 4-imidazolone-5-propanoate binding.

This sequence belongs to the metallo-dependent hydrolases superfamily. HutI family. Zn(2+) serves as cofactor. Requires Fe(3+) as cofactor.

It localises to the cytoplasm. The catalysed reaction is 4-imidazolone-5-propanoate + H2O = N-formimidoyl-L-glutamate. Its pathway is amino-acid degradation; L-histidine degradation into L-glutamate; N-formimidoyl-L-glutamate from L-histidine: step 3/3. Catalyzes the hydrolytic cleavage of the carbon-nitrogen bond in imidazolone-5-propanoate to yield N-formimidoyl-L-glutamate. It is the third step in the universal histidine degradation pathway. This Pseudomonas putida (strain ATCC 47054 / DSM 6125 / CFBP 8728 / NCIMB 11950 / KT2440) protein is Imidazolonepropionase.